The following is a 37-amino-acid chain: Cytochrome b6-f complex subunit 5 (37 aa).

Residues 5–25 traverse the membrane as a helical segment; sequence LLSGIVLGLITVSALGLFVAA.

The protein belongs to the PetG family. As to quaternary structure, the 4 large subunits of the cytochrome b6-f complex are cytochrome b6, subunit IV (17 kDa polypeptide, PetD), cytochrome f and the Rieske protein, while the 4 small subunits are PetG, PetL, PetM and PetN. The complex functions as a dimer.

It is found in the plastid. It localises to the chloroplast thylakoid membrane. Component of the cytochrome b6-f complex, which mediates electron transfer between photosystem II (PSII) and photosystem I (PSI), cyclic electron flow around PSI, and state transitions. PetG is required for either the stability or assembly of the cytochrome b6-f complex. The chain is Cytochrome b6-f complex subunit 5 from Phaeodactylum tricornutum (strain CCAP 1055/1).